The primary structure comprises 503 residues: ATP synthase subunit alpha (503 aa).

Position 169–176 (169–176) interacts with ATP; it reads GDRKTGKT.

It belongs to the ATPase alpha/beta chains family. As to quaternary structure, F-type ATPases have 2 components, CF(1) - the catalytic core - and CF(0) - the membrane proton channel. CF(1) has five subunits: alpha(3), beta(3), gamma(1), delta(1), epsilon(1). CF(0) has three main subunits: a(1), b(2) and c(9-12). The alpha and beta chains form an alternating ring which encloses part of the gamma chain. CF(1) is attached to CF(0) by a central stalk formed by the gamma and epsilon chains, while a peripheral stalk is formed by the delta and b chains.

It is found in the cell membrane. The enzyme catalyses ATP + H2O + 4 H(+)(in) = ADP + phosphate + 5 H(+)(out). Produces ATP from ADP in the presence of a proton gradient across the membrane. The alpha chain is a regulatory subunit. The sequence is that of ATP synthase subunit alpha from Lactobacillus helveticus (strain DPC 4571).